The chain runs to 256 residues: DNA repair protein RecO (256 aa).

This sequence belongs to the RecO family.

Involved in DNA repair and RecF pathway recombination. This chain is DNA repair protein RecO, found in Rhizobium johnstonii (strain DSM 114642 / LMG 32736 / 3841) (Rhizobium leguminosarum bv. viciae).